A 632-amino-acid polypeptide reads, in one-letter code: ATP-dependent DNA helicase RecQ (632 aa).

One can recognise a Helicase ATP-binding domain in the interval 47-215 (IDATLMGKDS…LRHLNLQSPH (169 aa)). Residue 60 to 67 (MATGNGKS) coordinates ATP. A DEAH box motif is present at residues 159 to 162 (DEAH). Residues 236–385 (PMEQLCRFVL…IEALKLQAIG (150 aa)) enclose the Helicase C-terminal domain. Residues Cys393, Cys410, Cys413, and Cys416 each contribute to the Zn(2+) site. One can recognise an HRDC domain in the interval 544-624 (AQYDKDLFAR…QQHKKVLTQH (81 aa)).

It belongs to the helicase family. RecQ subfamily. Mg(2+) is required as a cofactor. Requires Zn(2+) as cofactor.

The enzyme catalyses Couples ATP hydrolysis with the unwinding of duplex DNA by translocating in the 3'-5' direction.. The catalysed reaction is ATP + H2O = ADP + phosphate + H(+). In terms of biological role, an ATP-dependent DNA helicase which unwinds DNA in a 3'-5' direction. Plays a role in recombination. This chain is ATP-dependent DNA helicase RecQ, found in Pasteurella multocida (strain Pm70).